The primary structure comprises 198 residues: UPF0301 protein BDI_1431 (198 aa).

This sequence belongs to the UPF0301 (AlgH) family.

This is UPF0301 protein BDI_1431 from Parabacteroides distasonis (strain ATCC 8503 / DSM 20701 / CIP 104284 / JCM 5825 / NCTC 11152).